The primary structure comprises 1211 residues: Periplasmic acid trehalase ATC1 (1211 aa).

Residues 1–46 (MKRIRSLWFNAEASYSNLNNSPSLRNKNSTGNNSRSKNYRSFSRFD) are Cytoplasmic-facing. Residues 47 to 67 (LINSILLLMMLFLLAIFVTAL) traverse the membrane as a helical segment. The Periplasmic portion of the chain corresponds to 68-1211 (YLTKSSRLTY…ATIKEIVLND (1144 aa)). The required for cell surface targeting stretch occupies residues 70–131 (TKSSRLTYSH…NTAYYDDENM (62 aa)). Asn98, Asn207, Asn238, Asn247, Asn255, Asn259, Asn325, Asn370, Asn376, and Asn488 each carry an N-linked (GlcNAc...) asparagine glycan. 513-514 (WD) is a substrate binding site. Asn539, Asn568, Asn628, and Asn638 each carry an N-linked (GlcNAc...) asparagine glycan. Glu644 serves as the catalytic Proton donor. N-linked (GlcNAc...) asparagine glycosylation is found at Asn696 and Asn705. 711–712 (KQ) contributes to the substrate binding site. 10 N-linked (GlcNAc...) asparagine glycosylation sites follow: Asn879, Asn897, Asn910, Asn972, Asn990, Asn1031, Asn1049, Asn1064, Asn1147, and Asn1157.

The protein belongs to the glycosyl hydrolase 65 family. Post-translationally, glycosylated.

Its subcellular location is the membrane. The protein localises to the vacuole lumen. It localises to the periplasm. It carries out the reaction alpha,alpha-trehalose + H2O = alpha-D-glucose + beta-D-glucose. Functionally, periplasmic acid trehalase that catalyzes hydrolysis of the disaccharide trehalose and required for growth on trehalose as carbon source. Growth on trehalose is strictly respiratory. The polypeptide is Periplasmic acid trehalase ATC1 (Saccharomyces cerevisiae (strain CEN.PK113-7D) (Baker's yeast)).